A 686-amino-acid polypeptide reads, in one-letter code: DNA ligase (686 aa).

Residues 31 to 35 (DSEYD), 80 to 81 (SL), and Glu-109 contribute to the NAD(+) site. Lys-111 functions as the N6-AMP-lysine intermediate in the catalytic mechanism. Arg-132, Glu-166, Lys-280, and Lys-304 together coordinate NAD(+). Residues Cys-430, Cys-433, Cys-448, and Cys-453 each coordinate Zn(2+). One can recognise a BRCT domain in the interval 611 to 686 (NVEGILSGKT…IWSEQDLLDL (76 aa)).

It belongs to the NAD-dependent DNA ligase family. LigA subfamily. The cofactor is Mg(2+). Mn(2+) is required as a cofactor.

The catalysed reaction is NAD(+) + (deoxyribonucleotide)n-3'-hydroxyl + 5'-phospho-(deoxyribonucleotide)m = (deoxyribonucleotide)n+m + AMP + beta-nicotinamide D-nucleotide.. Its function is as follows. DNA ligase that catalyzes the formation of phosphodiester linkages between 5'-phosphoryl and 3'-hydroxyl groups in double-stranded DNA using NAD as a coenzyme and as the energy source for the reaction. It is essential for DNA replication and repair of damaged DNA. The polypeptide is DNA ligase (Lactococcus lactis subsp. cremoris (strain SK11)).